The following is a 177-amino-acid chain: Large ribosomal subunit protein uL6 (177 aa).

Part of the 50S ribosomal subunit.

This protein binds to the 23S rRNA, and is important in its secondary structure. It is located near the subunit interface in the base of the L7/L12 stalk, and near the tRNA binding site of the peptidyltransferase center. The sequence is that of Large ribosomal subunit protein uL6 from Rhodopseudomonas palustris (strain ATCC BAA-98 / CGA009).